The chain runs to 409 residues: Glycosyltransferase GtfC (409 aa).

This sequence belongs to the glycosyltransferase 28 family.

It carries out the reaction dTDP-beta-L-vancosamine + devancoaminyl-vancomycin = epivancomycin + dTDP + H(+). The enzyme catalyses chloroorienticin B + dTDP-beta-L-vancosamine = chloroeremomycin + dTDP + H(+). The protein operates within antibiotic biosynthesis; vancomycin biosynthesis. In terms of biological role, catalyzes the attachment of dTDP-L-4-epi-vancosamine to chloroorienticin B to form chloroeremomycin in the biosynthesis of glycopeptide antibiotic chloroeremomycin, a member of the vancomycin group of antibiotics. Also able to use dTDP-L-4-epi-vancosamine and devancoaminyl-vancomycin (DVV) to create epivancomycin. Acts downstream of GtfA. The sequence is that of Glycosyltransferase GtfC (gtfC) from Amycolatopsis orientalis (Nocardia orientalis).